Reading from the N-terminus, the 249-residue chain is 3-deoxy-D-manno-octulosonic acid kinase (249 aa).

The active site involves Asp-175.

It belongs to the protein kinase superfamily. KdkA/RfaP family.

The protein localises to the cell inner membrane. The catalysed reaction is an alpha-Kdo-(2-&gt;6)-lipid IVA + ATP = a 4-O-phospho-alpha-Kdo-(2-&gt;6)-lipid IVA + ADP + H(+). It functions in the pathway bacterial outer membrane biogenesis; LPS core biosynthesis. Catalyzes the ATP-dependent phosphorylation of the 3-deoxy-D-manno-octulosonic acid (Kdo) residue in Kdo-lipid IV(A) at the 4-OH position. The protein is 3-deoxy-D-manno-octulosonic acid kinase of Xanthomonas axonopodis pv. citri (strain 306).